Reading from the N-terminus, the 157-residue chain is Crossover junction endodeoxyribonuclease RuvC (157 aa).

Residues Asp7, Glu67, and Asp140 contribute to the active site. The Mg(2+) site is built by Asp7, Glu67, and Asp140.

The protein belongs to the RuvC family. In terms of assembly, homodimer which binds Holliday junction (HJ) DNA. The HJ becomes 2-fold symmetrical on binding to RuvC with unstacked arms; it has a different conformation from HJ DNA in complex with RuvA. In the full resolvosome a probable DNA-RuvA(4)-RuvB(12)-RuvC(2) complex forms which resolves the HJ. Mg(2+) serves as cofactor.

The protein localises to the cytoplasm. It carries out the reaction Endonucleolytic cleavage at a junction such as a reciprocal single-stranded crossover between two homologous DNA duplexes (Holliday junction).. The RuvA-RuvB-RuvC complex processes Holliday junction (HJ) DNA during genetic recombination and DNA repair. Endonuclease that resolves HJ intermediates. Cleaves cruciform DNA by making single-stranded nicks across the HJ at symmetrical positions within the homologous arms, yielding a 5'-phosphate and a 3'-hydroxyl group; requires a central core of homology in the junction. The consensus cleavage sequence is 5'-(A/T)TT(C/G)-3'. Cleavage occurs on the 3'-side of the TT dinucleotide at the point of strand exchange. HJ branch migration catalyzed by RuvA-RuvB allows RuvC to scan DNA until it finds its consensus sequence, where it cleaves and resolves the cruciform DNA. This chain is Crossover junction endodeoxyribonuclease RuvC, found in Rickettsia africae (strain ESF-5).